Consider the following 1060-residue polypeptide: Carbamoyl phosphate synthase large chain (1060 aa).

The carboxyphosphate synthetic domain stretch occupies residues 1–401; sequence MPKRTDIKKI…SLLKAVRSLE (401 aa). Residues Arg129, Arg169, Gly175, Gly176, Lys208, Ile210, Glu215, Gly241, Ile242, His243, Gln284, and Glu298 each coordinate ATP. An ATP-grasp 1 domain is found at 133–327; it reads KQLMEELEQP…IAKLAAKIAV (195 aa). Positions 284, 298, and 300 each coordinate Mg(2+). Positions 284, 298, and 300 each coordinate Mn(2+). The segment at 402-546 is oligomerization domain; the sequence is IGAYHNELAE…YSTYEVENES (145 aa). A carbamoyl phosphate synthetic domain region spans residues 547-929; sequence NVSKKPSVLV…ALYKAFEASG (383 aa). The ATP-grasp 2 domain occupies 671 to 861; the sequence is EQALQELAIP…MAQVATKAIL (191 aa). ATP is bound by residues Arg707, Ser746, Leu748, Glu752, Gly777, Val778, His779, Ser780, Gln820, and Glu832. Mg(2+)-binding residues include Gln820, Glu832, and Asn834. 3 residues coordinate Mn(2+): Gln820, Glu832, and Asn834. In terms of domain architecture, MGS-like spans 930–1060; sequence LHLPSYGAVL…ESRAFTTEAI (131 aa). The tract at residues 930 to 1060 is allosteric domain; sequence LHLPSYGAVL…ESRAFTTEAI (131 aa).

Belongs to the CarB family. In terms of assembly, composed of two chains; the small (or glutamine) chain promotes the hydrolysis of glutamine to ammonia, which is used by the large (or ammonia) chain to synthesize carbamoyl phosphate. Tetramer of heterodimers (alpha,beta)4. Mg(2+) serves as cofactor. Requires Mn(2+) as cofactor.

It catalyses the reaction hydrogencarbonate + L-glutamine + 2 ATP + H2O = carbamoyl phosphate + L-glutamate + 2 ADP + phosphate + 2 H(+). The enzyme catalyses hydrogencarbonate + NH4(+) + 2 ATP = carbamoyl phosphate + 2 ADP + phosphate + 2 H(+). It functions in the pathway amino-acid biosynthesis; L-arginine biosynthesis; carbamoyl phosphate from bicarbonate: step 1/1. Its pathway is pyrimidine metabolism; UMP biosynthesis via de novo pathway; (S)-dihydroorotate from bicarbonate: step 1/3. In terms of biological role, large subunit of the glutamine-dependent carbamoyl phosphate synthetase (CPSase). CPSase catalyzes the formation of carbamoyl phosphate from the ammonia moiety of glutamine, carbonate, and phosphate donated by ATP, constituting the first step of 2 biosynthetic pathways, one leading to arginine and/or urea and the other to pyrimidine nucleotides. The large subunit (synthetase) binds the substrates ammonia (free or transferred from glutamine from the small subunit), hydrogencarbonate and ATP and carries out an ATP-coupled ligase reaction, activating hydrogencarbonate by forming carboxy phosphate which reacts with ammonia to form carbamoyl phosphate. The chain is Carbamoyl phosphate synthase large chain from Enterococcus faecalis (strain ATCC 700802 / V583).